A 244-amino-acid chain; its full sequence is Methylthioribulose-1-phosphate dehydratase (244 aa).

A substrate-binding site is contributed by Cys-89. Zn(2+) is bound by residues His-107 and His-109. The Proton donor/acceptor role is filled by Glu-130. His-192 contributes to the Zn(2+) binding site.

The protein belongs to the aldolase class II family. MtnB subfamily. Zn(2+) is required as a cofactor.

The protein localises to the cytoplasm. It carries out the reaction 5-(methylsulfanyl)-D-ribulose 1-phosphate = 5-methylsulfanyl-2,3-dioxopentyl phosphate + H2O. It functions in the pathway amino-acid biosynthesis; L-methionine biosynthesis via salvage pathway; L-methionine from S-methyl-5-thio-alpha-D-ribose 1-phosphate: step 2/6. Functionally, catalyzes the dehydration of methylthioribulose-1-phosphate (MTRu-1-P) into 2,3-diketo-5-methylthiopentyl-1-phosphate (DK-MTP-1-P). The protein is Methylthioribulose-1-phosphate dehydratase of Saccharomyces cerevisiae (strain ATCC 204508 / S288c) (Baker's yeast).